Reading from the N-terminus, the 132-residue chain is Small ribosomal subunit protein uS11 (132 aa).

Belongs to the universal ribosomal protein uS11 family. In terms of assembly, part of the 30S ribosomal subunit. Interacts with proteins S7 and S18. Binds to IF-3.

In terms of biological role, located on the platform of the 30S subunit, it bridges several disparate RNA helices of the 16S rRNA. Forms part of the Shine-Dalgarno cleft in the 70S ribosome. The protein is Small ribosomal subunit protein uS11 of Alkaliphilus metalliredigens (strain QYMF).